The following is a 48-amino-acid chain: Delta-stichotoxin-Hmg4a (48 aa).

Intrachain disulfides connect Cys-3–Cys-43, Cys-5–Cys-33, and Cys-26–Cys-44.

Belongs to the sea anemone sodium channel inhibitory toxin family. Type II subfamily.

The protein resides in the secreted. Its subcellular location is the nematocyst. Its function is as follows. Binds specifically to voltage-gated sodium channels (Nav), thereby delaying their inactivation during signal transduction. Its toxicity is weaker than that of RpIII (AC P08380). The protein is Delta-stichotoxin-Hmg4a of Heteractis magnifica (Magnificent sea anemone).